A 311-amino-acid polypeptide reads, in one-letter code: tRNA-cytidine(32) 2-sulfurtransferase (311 aa).

The PP-loop motif signature appears at 47–52 (SGGKDS). [4Fe-4S] cluster contacts are provided by Cys122, Cys125, and Cys213.

The protein belongs to the TtcA family. Homodimer. The cofactor is Mg(2+). Requires [4Fe-4S] cluster as cofactor.

Its subcellular location is the cytoplasm. The catalysed reaction is cytidine(32) in tRNA + S-sulfanyl-L-cysteinyl-[cysteine desulfurase] + AH2 + ATP = 2-thiocytidine(32) in tRNA + L-cysteinyl-[cysteine desulfurase] + A + AMP + diphosphate + H(+). The protein operates within tRNA modification. Catalyzes the ATP-dependent 2-thiolation of cytidine in position 32 of tRNA, to form 2-thiocytidine (s(2)C32). The sulfur atoms are provided by the cysteine/cysteine desulfurase (IscS) system. This Salmonella paratyphi A (strain ATCC 9150 / SARB42) protein is tRNA-cytidine(32) 2-sulfurtransferase.